A 354-amino-acid polypeptide reads, in one-letter code: Homeobox-leucine zipper protein HOX27 (354 aa).

The interval 98-175 (SVAAGAPGME…DDEGASARKK (78 aa)) is disordered. The segment covering 148-157 (QGGGGGGGGE) has biased composition (gly residues). The homeobox DNA-binding region spans 171 to 230 (SARKKLRLSKEQSAFLEESFKEHSTLNPKQKVALAKQLNLRPRQVEVWFQNRRARTKLKQ). The leucine-zipper stretch occupies residues 229–273 (KQTEVDCEYLKRCCETLTEENRRLHKELAELRALKTARPFYMHLP). The disordered stretch occupies residues 294–323 (STSAPAAATSPAAAPTAAARTAVASPEPHR).

This sequence belongs to the HD-ZIP homeobox family. Class II subfamily. As to expression, expressed in seedlings, roots, stems, leaf sheaths and blades and panicles.

The protein localises to the nucleus. Its function is as follows. Probable transcription factor. In Oryza sativa subsp. indica (Rice), this protein is Homeobox-leucine zipper protein HOX27 (HOX27).